A 514-amino-acid chain; its full sequence is UDP-N-acetylmuramyl-tripeptide synthetase (514 aa).

2 residues coordinate UDP-N-acetyl-alpha-D-muramoyl-L-alanyl-D-glutamate: L44 and S46. ATP is bound at residue 129–135; sequence GTNGKTS. UDP-N-acetyl-alpha-D-muramoyl-L-alanyl-D-glutamate-binding positions include 171-172, S198, and R206; that span reads TT. An N6-carboxylysine modification is found at K238.

Belongs to the MurCDEF family. MurE subfamily. Carboxylation is probably crucial for Mg(2+) binding and, consequently, for the gamma-phosphate positioning of ATP.

The protein resides in the cytoplasm. It participates in cell wall biogenesis; peptidoglycan biosynthesis. Catalyzes the addition of an amino acid to the nucleotide precursor UDP-N-acetylmuramoyl-L-alanyl-D-glutamate (UMAG) in the biosynthesis of bacterial cell-wall peptidoglycan. The polypeptide is UDP-N-acetylmuramyl-tripeptide synthetase (Leifsonia xyli subsp. xyli (strain CTCB07)).